The primary structure comprises 446 residues: Elongation factor Ts, mitochondrial (446 aa).

The N-terminal 33 residues, 1 to 33, are a transit peptide targeting the mitochondrion; sequence MSGSRSALSVVRLAACAKPCTLGSTSSVLTRPF.

This sequence belongs to the EF-Ts family.

It is found in the mitochondrion. In terms of biological role, associates with the EF-Tu.GDP complex and induces the exchange of GDP to GTP. It remains bound to the aminoacyl-tRNA.EF-Tu.GTP complex up to the GTP hydrolysis stage on the ribosome. This is Elongation factor Ts, mitochondrial from Mycosarcoma maydis (Corn smut fungus).